Here is a 301-residue protein sequence, read N- to C-terminus: Glucose-1-phosphate adenylyltransferase large subunit (301 aa).

It belongs to the bacterial/plant glucose-1-phosphate adenylyltransferase family. In terms of assembly, heterotetramer.

It localises to the plastid. The protein resides in the chloroplast. It is found in the amyloplast. The catalysed reaction is alpha-D-glucose 1-phosphate + ATP + H(+) = ADP-alpha-D-glucose + diphosphate. Its pathway is glycan biosynthesis; starch biosynthesis. Its activity is regulated as follows. Insensitive to 3'phosphoglycerate and orthophosphate. In terms of biological role, this protein plays a role in synthesis of starch. It catalyzes the synthesis of the activated glycosyl donor, ADP-glucose from Glc-1-P and ATP. The chain is Glucose-1-phosphate adenylyltransferase large subunit (AGA.1) from Triticum aestivum (Wheat).